The sequence spans 513 residues: Proline-rich receptor-like protein kinase PERK3 (513 aa).

Residues 1–123 (MARSNRCVPQ…SPPSPSRLST (123 aa)) lie on the Extracellular side of the membrane. The N-linked (GlcNAc...) asparagine glycan is linked to asparagine 11. Residues 27-36 (LKSRWQQITM) are compositionally biased toward polar residues. A disordered region spans residues 27–119 (LKSRWQQITM…GFSLSPPSPS (93 aa)). N-linked (GlcNAc...) asparagine glycosylation is present at asparagine 66. Positions 78-89 (PSTSTPPRLGNR) are enriched in low complexity. Residues 99 to 111 (GQEPTTPTMTPGF) are compositionally biased toward polar residues. Residues 124 to 144 (GAVVGISIGGGVFVLTLIFFL) form a helical membrane-spanning segment. The Cytoplasmic portion of the chain corresponds to 145–513 (CKKKRPRDDK…TAQRYGGDSL (369 aa)). Phosphothreonine is present on threonine 172. The Protein kinase domain maps to 183–334 (FSEANLLGEG…DFGLAKIALD (152 aa)). Residues 189 to 197 (LGEGGFGFV) and lysine 211 contribute to the ATP site. Tyrosine 256 is modified (phosphotyrosine). Catalysis depends on aspartate 307, which acts as the Proton acceptor. Residue serine 340 is modified to Phosphoserine. Residues threonine 341 and threonine 346 each carry the phosphothreonine modification. Tyrosine 354 carries the post-translational modification Phosphotyrosine.

Belongs to the protein kinase superfamily. Ser/Thr protein kinase family. As to expression, expressed at low levels in inflorescence bolt, flower buds, siliques, roots, seedlings and leaves.

Its subcellular location is the cell membrane. It carries out the reaction L-seryl-[protein] + ATP = O-phospho-L-seryl-[protein] + ADP + H(+). The catalysed reaction is L-threonyl-[protein] + ATP = O-phospho-L-threonyl-[protein] + ADP + H(+). In Arabidopsis thaliana (Mouse-ear cress), this protein is Proline-rich receptor-like protein kinase PERK3 (PERK3).